The chain runs to 503 residues: DEAD-box ATP-dependent RNA helicase CshA (503 aa).

The Q motif motif lies at 2–30; sequence QNFKELGISDKTVETLEAMGFKEPTPIQK. In terms of domain architecture, Helicase ATP-binding spans 33–203; it reads IPYTLEGKDI…QQFMKSPQIV (171 aa). 46–53 provides a ligand contact to ATP; that stretch reads AQTGTGKT. The short motif at 150-153 is the DEAD box element; it reads DEAD. Residues 214–375 form the Helicase C-terminal domain; that stretch reads QIDEYYTIVK…LRPPHRKEVL (162 aa). The interval 436–503 is disordered; that stretch reads EKPLARKNRQ…KGRTFADLQK (68 aa). Basic residues predominate over residues 466-480; it reads KRSKGNFNKKKGKKT. The segment covering 481–490 has biased composition (basic and acidic residues); it reads DRRERQDKGR.

It belongs to the DEAD box helicase family. CshA subfamily. In terms of assembly, oligomerizes, may be a member of the RNA degradosome.

It is found in the cytoplasm. The enzyme catalyses ATP + H2O = ADP + phosphate + H(+). Functionally, DEAD-box RNA helicase possibly involved in RNA degradation. Unwinds dsRNA in both 5'- and 3'-directions, has RNA-dependent ATPase activity. The polypeptide is DEAD-box ATP-dependent RNA helicase CshA (Staphylococcus haemolyticus (strain JCSC1435)).